We begin with the raw amino-acid sequence, 216 residues long: Uridine kinase (216 aa).

16–23 (GASASGKS) contacts ATP.

The protein belongs to the uridine kinase family.

Its subcellular location is the cytoplasm. It catalyses the reaction uridine + ATP = UMP + ADP + H(+). It carries out the reaction cytidine + ATP = CMP + ADP + H(+). The protein operates within pyrimidine metabolism; CTP biosynthesis via salvage pathway; CTP from cytidine: step 1/3. It functions in the pathway pyrimidine metabolism; UMP biosynthesis via salvage pathway; UMP from uridine: step 1/1. This Pasteurella multocida (strain Pm70) protein is Uridine kinase.